Consider the following 69-residue polypeptide: uncharacterized protein (69 aa).

4Fe-4S ferredoxin-type domains are found at residues 2-30 (KIEINENFCKGCDICIVVCPRGVFEKSKK) and 38-67 (PPIPVNPEKCTKCNLCILQCPDQAISIELS). Cys-10, Cys-13, Cys-16, Cys-20, Cys-47, Cys-50, Cys-53, and Cys-57 together coordinate [4Fe-4S] cluster.

[4Fe-4S] cluster is required as a cofactor.

This is an uncharacterized protein from Methanocaldococcus jannaschii (strain ATCC 43067 / DSM 2661 / JAL-1 / JCM 10045 / NBRC 100440) (Methanococcus jannaschii).